A 224-amino-acid chain; its full sequence is Ribose-5-phosphate isomerase A 2 (224 aa).

Substrate contacts are provided by residues 27-30 (SGST), 83-86 (DGTD), and 96-99 (KGGG). Glu-105 acts as the Proton acceptor in catalysis. Lys-123 serves as a coordination point for substrate.

It belongs to the ribose 5-phosphate isomerase family. In terms of assembly, homodimer.

It catalyses the reaction aldehydo-D-ribose 5-phosphate = D-ribulose 5-phosphate. Its pathway is carbohydrate degradation; pentose phosphate pathway; D-ribose 5-phosphate from D-ribulose 5-phosphate (non-oxidative stage): step 1/1. Its function is as follows. Catalyzes the reversible conversion of ribose-5-phosphate to ribulose 5-phosphate. This is Ribose-5-phosphate isomerase A 2 from Oceanobacillus iheyensis (strain DSM 14371 / CIP 107618 / JCM 11309 / KCTC 3954 / HTE831).